The sequence spans 252 residues: Cilia- and flagella-associated protein 300 (252 aa).

It belongs to the CFAP300 family.

The protein localises to the cytoplasm. It is found in the cytoskeleton. Its subcellular location is the cilium axoneme. Cilium- and flagellum-specific protein that plays a role in axonemal structure organization and motility. Plays a role in outer and inner axonemal dynein arm assembly. The sequence is that of Cilia- and flagella-associated protein 300 from Paramecium tetraurelia.